We begin with the raw amino-acid sequence, 1399 residues long: DNA-directed RNA polymerase subunit beta' (1399 aa).

Zn(2+) contacts are provided by cysteine 70, cysteine 72, cysteine 85, and cysteine 88. Residues aspartate 460, aspartate 462, and aspartate 464 each contribute to the Mg(2+) site. 4 residues coordinate Zn(2+): cysteine 814, cysteine 888, cysteine 895, and cysteine 898.

It belongs to the RNA polymerase beta' chain family. In terms of assembly, the RNAP catalytic core consists of 2 alpha, 1 beta, 1 beta' and 1 omega subunit. When a sigma factor is associated with the core the holoenzyme is formed, which can initiate transcription. Requires Mg(2+) as cofactor. It depends on Zn(2+) as a cofactor.

It carries out the reaction RNA(n) + a ribonucleoside 5'-triphosphate = RNA(n+1) + diphosphate. In terms of biological role, DNA-dependent RNA polymerase catalyzes the transcription of DNA into RNA using the four ribonucleoside triphosphates as substrates. The polypeptide is DNA-directed RNA polymerase subunit beta' (Ectopseudomonas mendocina (strain ymp) (Pseudomonas mendocina)).